The following is a 312-amino-acid chain: Signal peptidase I (312 aa).

A helical membrane pass occupies residues 7–27; that stretch reads IFLLTSTFFTGILWIIDHILL. Residues 28–63 are Cytoplasmic-facing; sequence IKNYFYNKKKTKNNNTILINKVILENKKCFFRSLSS. A helical transmembrane segment spans residues 64 to 84; sequence LFPTFFIVFIIRSFIYEPFQI. Over 85 to 312 the chain is Extracellular; that stretch reads PSGSMMPTLL…IRIKRIGNIY (228 aa). Residues Ser88 and Lys142 contribute to the active site.

Belongs to the peptidase S26 family.

The protein localises to the cell membrane. It catalyses the reaction Cleavage of hydrophobic, N-terminal signal or leader sequences from secreted and periplasmic proteins.. This chain is Signal peptidase I (lepB), found in Buchnera aphidicola subsp. Schizaphis graminum (strain Sg).